A 93-amino-acid polypeptide reads, in one-letter code: NAD(P)H-quinone oxidoreductase subunit 4L, chloroplastic (93 aa).

2 helical membrane passes run Met1–Ile21 and Ile60–Ala80.

Belongs to the complex I subunit 4L family. In terms of assembly, NDH is composed of at least 16 different subunits, 5 of which are encoded in the nucleus.

The protein localises to the plastid. The protein resides in the chloroplast thylakoid membrane. It carries out the reaction a plastoquinone + NADH + (n+1) H(+)(in) = a plastoquinol + NAD(+) + n H(+)(out). It catalyses the reaction a plastoquinone + NADPH + (n+1) H(+)(in) = a plastoquinol + NADP(+) + n H(+)(out). In terms of biological role, NDH shuttles electrons from NAD(P)H:plastoquinone, via FMN and iron-sulfur (Fe-S) centers, to quinones in the photosynthetic chain and possibly in a chloroplast respiratory chain. The immediate electron acceptor for the enzyme in this species is believed to be plastoquinone. Couples the redox reaction to proton translocation, and thus conserves the redox energy in a proton gradient. In Anthoceros angustus (Hornwort), this protein is NAD(P)H-quinone oxidoreductase subunit 4L, chloroplastic.